The following is a 605-amino-acid chain: Protein Spindly (605 aa).

Position 1 is an N-acetylmethionine (Met-1). A coiled-coil region spans residues 3-442; that stretch reads TDIVINLRCK…ELKLKYEPEE (440 aa). Phosphoserine is present on residues Ser-513, Ser-515, and Ser-555. The tract at residues 545 to 581 is disordered; the sequence is LSERSGNTLNSPRLAAESKLQTEVKEGKETASKLEKE. Residues 564 to 581 are compositionally biased toward basic and acidic residues; it reads LQTEVKEGKETASKLEKE.

This sequence belongs to the Spindly family. In terms of assembly, interacts with KNTC1 and ZW10. These interactions appear weak and may be transient or indirect. Interacts with dynein intermediate chain and dynactin (DCTN1). Interacts with the catalytically active form of USP45. In terms of processing, monoubiquitinated with'Lys-48' linkage. Deubiquitinated by USP45.

The protein resides in the cytoplasm. Its subcellular location is the cytoskeleton. It localises to the microtubule organizing center. The protein localises to the centrosome. It is found in the chromosome. The protein resides in the centromere. Its subcellular location is the kinetochore. It localises to the nucleus. The protein localises to the spindle pole. Functionally, required for the localization of dynein and dynactin to the mitotic kintochore. Dynein is believed to control the initial lateral interaction between the kinetochore and spindle microtubules and to facilitate the subsequent formation of end-on kinetochore-microtubule attachments mediated by the NDC80 complex. Also required for correct spindle orientation. Does not appear to be required for the removal of spindle assembly checkpoint (SAC) proteins from the kinetochore upon bipolar spindle attachment. Acts as an adapter protein linking the dynein motor complex to various cargos and converts dynein from a non-processive to a highly processive motor in the presence of dynactin. Facilitates the interaction between dynein and dynactin and activates dynein processivity (the ability to move along a microtubule for a long distance without falling off the track). Plays a role in cell migration. The protein is Protein Spindly of Macaca fascicularis (Crab-eating macaque).